Here is an 898-residue protein sequence, read N- to C-terminus: MAAAAAEEGMEPRALQYEQTLMYGRYTQDLGAFAKEEAARIRLGGPEPWKGPPSSRAAPELLEYGRSRCARCRVCSVRCHKFLVSRVGEDWIFLVLLGLLMALVSWVMDYAIAACLQAQQWMSRGLNTSILLQYLAWVTYPVVLITFSAGFTQILAPQAVGSGIPEMKTILRGVVLKEYLTLKTFIAKVIGLTCALGSGMPLGKEGPFVHIASMCAALLSKFLSLFGGIYENESRNTEMLAAACAVGVGCCFAAPIGGVLFSIEVTSTFFAVRNYWRGFFAATFSAFIFRVLAVWNRDEETITALFKTRFRLDFPFDLQELPAFAVIGIASGFGGALFVYLNRKIVQVMRKQKTINRFLMRKRLLFPALVTLLISTLTFPPGFGQFMAGQLSQKETLVTLFDNRTWVRQGLVEELEPPSTSQAWNPPRANVFLTLVIFILMKFWMSALATTIPVPCGAFMPVFVIGAAFGRLVGESMAAWFPDGIHTDSSTYRIVPGGYAVVGAAALAGAVTHTVSTAVIVFELTGQIAHILPVMIAVILANAVAQSLQPSLYDSIIRIKKLPYLPELGWGRHQQYRVRVEDIMVRDVPHVALSCTFRDLRLALHRTKGRMLALVESPESMILLGSIERSQVVALLGAQLSPARRRQHMQERRATQTSPLSDQEGPPTPEASVCFQVNTEDSAFPAARGETHKPLKPALKRGPSVTRNLGESPTGSAESAGIALRSLFCGSPPPEAASEKLESCEKRKLKRVRISLASDADLEGEMSPEEILEWEEQQLDEPVNFSDCKIDPAPFQLVERTSLHKTHTIFSLLGVDHAYVTSIGRLIGIVTLKELRKAIEGSVTAQGVKVRPPLASFRDSATSSSDTETTEVHALWGPHSRHGLPREGSPSDSDDKCQ.

At Ala2 the chain carries N-acetylalanine. At 2 to 87 (AAAAAEEGME…RCHKFLVSRV (86 aa)) the chain is on the cytoplasmic side. An essential for channel gating by both voltage and cell volume region spans residues 16-34 (QYEQTLMYGRYTQDLGAFA). A Phosphothreonine modification is found at Thr20. Residues 36-49 (EEAARIRLGGPEPW) are modulates channel gating by both voltage and cell volume. 2 consecutive transmembrane segments (helical) span residues 88–121 (GEDWIFLVLLGLLMALVSWVMDYAIAACLQAQQW) and 130–155 (ILLQYLAWVTYPVVLITFSAGFTQIL). A Selectivity filter part_1 motif is present at residues 161–165 (GSGIP). Ser162 is a binding site for chloride. Residues 164–171 (IPEMKTIL) constitute an intramembrane region (helical). Helical transmembrane passes span 180-198 (LTLKTFIAKVIGLTCALGS) and 205-223 (EGPFVHIASMCAALLSKFL). The Selectivity filter part_2 motif lies at 203–207 (GKEGP). 2 intramembrane regions (helical) span residues 239-251 (MLAAACAVGVGCC) and 255-263 (PIGGVLFSI). Transmembrane regions (helical) follow at residues 275-295 (YWRGFFAATFSAFIFRVLAVW), 321-349 (LPAFAVIGIASGFGGALFVYLNRKIVQVM), 358-377 (FLMRKRLLFPALVTLLISTL), 429-449 (ANVFLTLVIFILMKFWMSALA), and 457-480 (GAFMPVFVIGAAFGRLVGESMAAW). Positions 457-461 (GAFMP) match the Selectivity filter part_3 motif. Phe459 contacts chloride. An intramembrane region (helical) is located at residues 497–511 (GGYAVVGAAALAGAV). Residues 512–513 (TH) constitute an intramembrane region (note=Loop between two helices). The helical intramembrane region spans 514 to 525 (TVSTAVIVFELT). Residues 526–530 (GQIAH) constitute an intramembrane region (note=Loop between two helices). The helical transmembrane segment at 531–548 (ILPVMIAVILANAVAQSL) threads the bilayer. Residues 549 to 898 (QPSLYDSIIR…SPSDSDDKCQ (350 aa)) are Cytoplasmic-facing. Tyr553 provides a ligand contact to chloride. Residues 584–642 (MVRDVPHVALSCTFRDLRLALHRTKGRMLALVESPESMILLGSIERSQVVALLGAQLSP) enclose the CBS 1 domain. Disordered stretches follow at residues 643-672 (ARRRQHMQERRATQTSPLSDQEGPPTPEAS) and 686-717 (AARGETHKPLKPALKRGPSVTRNLGESPTGSA). Over residues 705–717 (VTRNLGESPTGSA) the composition is skewed to polar residues. Phosphoserine occurs at positions 712 and 758. Residues 790–850 (IDPAPFQLVE…GSVTAQGVKV (61 aa)) form the CBS 2 domain. Residues 812-813 (LL) carry the Basolateral membrane sorting motif. The segment at 856–898 (SFRDSATSSSDTETTEVHALWGPHSRHGLPREGSPSDSDDKCQ) is disordered.

This sequence belongs to the chloride channel (TC 2.A.49) family. ClC-2/CLCN2 subfamily. Homodimer. Interacts with auxiliary subunit HEPACAM. In terms of processing, phosphorylated. Activated by dephosphorylation. In terms of tissue distribution, ubiquitously expressed. Moderately expressed in aortic and coronary vascular smooth muscle cells and expressed at a low level in aortic endothelial cells. Expressed in the adrenal gland, predominantly in the zona glomerulosa. Expressed in white mater perivascular astrocytes and ependymal cells (at protein level).

The protein localises to the cell membrane. The protein resides in the basolateral cell membrane. It localises to the cell projection. It is found in the dendritic spine membrane. Its subcellular location is the axon. The catalysed reaction is chloride(in) = chloride(out). It catalyses the reaction thiocyanate(in) = thiocyanate(out). It carries out the reaction bromide(in) = bromide(out). The enzyme catalyses nitrate(in) = nitrate(out). The catalysed reaction is iodide(out) = iodide(in). With respect to regulation, common gate kinetics are down-regulated by intracellular ATP. Inhibited by AK-42, a derivative of meclofenamate. Inhibited by Cd(2+). Inhibited by Zn(2+) and PKC activation. Inhibited at acidic pH. CCLN2:HEPACAM channel conductance is up-regulated upon hypo-osmolarity. In terms of biological role, voltage-gated and osmosensitive chloride channel. Forms a homodimeric channel where each subunit has its own ion conduction pathway. Conducts double-barreled currents controlled by two types of gates, two fast glutamate gates that control each subunit independently and a slow common gate that opens and shuts off both subunits simultaneously. Displays inward rectification currents activated upon membrane hyperpolarization and extracellular hypotonicity. Contributes to chloride conductance involved in neuron excitability. In hippocampal neurons, generates a significant part of resting membrane conductance and provides an additional chloride efflux pathway to prevent chloride accumulation in dendrites upon GABA receptor activation. In glia, associates with the auxiliary subunit HEPACAM/GlialCAM at astrocytic processes and myelinated fiber tracts where it may regulate transcellular chloride flux buffering extracellular chloride and potassium concentrations. Regulates aldosterone production in adrenal glands. The opening of CLCN2 channels at hyperpolarized membrane potentials in the glomerulosa causes cell membrane depolarization, activation of voltage-gated calcium channels and increased expression of aldosterone synthase, the rate-limiting enzyme for aldosterone biosynthesis. Contributes to chloride conductance in retinal pigment epithelium involved in phagocytosis of shed photoreceptor outer segments and photoreceptor renewal. Conducts chloride currents at the basolateral membrane of epithelial cells with a role in chloride reabsorption rather than secretion. Permeable to small monovalent anions with chloride &gt; thiocyanate &gt; bromide &gt; nitrate &gt; iodide ion selectivity. This chain is Chloride channel protein 2, found in Homo sapiens (Human).